The primary structure comprises 494 residues: Cytochrome P450 2C23 (494 aa).

Ser-131 is modified (phosphoserine). An N6-acetyllysine mark is found at Lys-253 and Lys-379. Position 439 (Cys-439) interacts with heme.

Belongs to the cytochrome P450 family. The cofactor is heme. Expressed in kidney and liver. Expressed in cortical tubules of kidney (at protein level).

The protein localises to the endoplasmic reticulum membrane. It is found in the microsome membrane. It catalyses the reaction (5Z,8Z,11Z,14Z)-eicosatetraenoate + reduced [NADPH--hemoprotein reductase] + O2 = (8R,9S)-epoxy-(5Z,11Z,14Z)-eicosatrienoate + oxidized [NADPH--hemoprotein reductase] + H2O + H(+). The enzyme catalyses (5Z,8Z,11Z,14Z)-eicosatetraenoate + reduced [NADPH--hemoprotein reductase] + O2 = (11R,12S)-epoxy-(5Z,8Z,14Z)-eicosatrienoate + oxidized [NADPH--hemoprotein reductase] + H2O + H(+). It carries out the reaction (5Z,8Z,11Z,14Z)-eicosatetraenoate + reduced [NADPH--hemoprotein reductase] + O2 = (11S,12R)-epoxy-(5Z,8Z,14Z)-eicosatrienoate + oxidized [NADPH--hemoprotein reductase] + H2O + H(+). The catalysed reaction is (5Z,8Z,11Z,14Z)-eicosatetraenoate + reduced [NADPH--hemoprotein reductase] + O2 = (14R,15S)-epoxy-(5Z,8Z,11Z)-eicosatrienoate + oxidized [NADPH--hemoprotein reductase] + H2O + H(+). It catalyses the reaction (5Z,8Z,11Z,14Z)-eicosatetraenoate + reduced [NADPH--hemoprotein reductase] + O2 = (14S,15R)-epoxy-(5Z,8Z,11Z)-eicosatrienoate + oxidized [NADPH--hemoprotein reductase] + H2O + H(+). The enzyme catalyses (5Z,8Z,11Z,14Z,17Z)-eicosapentaenoate + reduced [NADPH--hemoprotein reductase] + O2 = 8,9-epoxy-(5Z,11Z,14Z,17Z)-eicosatetraenoate + oxidized [NADPH--hemoprotein reductase] + H2O + H(+). It carries out the reaction (5Z,8Z,11Z,14Z,17Z)-eicosapentaenoate + reduced [NADPH--hemoprotein reductase] + O2 = 11,12-epoxy-(5Z,8Z,14Z,17Z)-eicosatetraenoate + oxidized [NADPH--hemoprotein reductase] + H2O + H(+). The catalysed reaction is (5Z,8Z,11Z,14Z,17Z)-eicosapentaenoate + reduced [NADPH--hemoprotein reductase] + O2 = 14,15-epoxy-(5Z,8Z,11Z,17Z)-eicosatetraenoate + oxidized [NADPH--hemoprotein reductase] + H2O + H(+). It catalyses the reaction (5Z,8Z,11Z,14Z,17Z)-eicosapentaenoate + reduced [NADPH--hemoprotein reductase] + O2 = (17R,18S)-epoxy-(5Z,8Z,11Z,14Z)-eicosatetraenoate + oxidized [NADPH--hemoprotein reductase] + H2O + H(+). The enzyme catalyses (5Z,8Z,11Z,14Z,17Z)-eicosapentaenoate + reduced [NADPH--hemoprotein reductase] + O2 = (17S,18R)-epoxy-(5Z,8Z,11Z,14Z)-eicosatetraenoate + oxidized [NADPH--hemoprotein reductase] + H2O + H(+). It carries out the reaction 20-hydroxy-(5Z,8Z,11Z,14Z)-eicosatetraenoate + reduced [NADPH--hemoprotein reductase] + O2 = 20-hydroxy-8,9-epoxy-(5Z,11Z,14Z)-eicosatrienoate + oxidized [NADPH--hemoprotein reductase] + H2O + H(+). It participates in lipid metabolism; arachidonate metabolism. Its function is as follows. A cytochrome P450 monooxygenase involved in polyunsaturated fatty acids (PUFAs) metabolism and signaling. Catalyzes preferentially the epoxidation of double bonds of PUFAs. Converts arachidonic acid (ARA, C20:4(n-6)) primarily to stereospecific products 8R,9S-, 11R,12S-, and 14S,15R-EET. Plays a major role in the formation of EETs and hydroxy-EETs (HEETs) in kidney. Via EETs may inhibit the epithelial sodium channels (ENaCs) in nephron segments, preventing excessive sodium absorption during high dietary salt intake. Participates in the formation of anti-inflammatory hydroxyepoxyeicosatrienoic acids (HEETs) by converting 20-hydroxyeicosatetraenoic acid (20-HETE) to 20,8,9-HEET, an activator of PPARA. Metabolizes eicosapentaenoic acid (EPA, C20:5(n-3)) to epoxyeicosatetraenoic acid (EETeTr) regioisomers, 8,9-, 11,12-, 14,15-, and 17,18-EETeTr, preferentially producing 17R,18S enantiomer. Mechanistically, uses molecular oxygen inserting one oxygen atom into a substrate, and reducing the second into a water molecule, with two electrons provided by NADPH via cytochrome P450 reductase (NADPH--hemoprotein reductase). The chain is Cytochrome P450 2C23 from Rattus norvegicus (Rat).